The primary structure comprises 230 residues: Fibrillarin-like rRNA/tRNA 2'-O-methyltransferase (230 aa).

S-adenosyl-L-methionine-binding positions include 87 to 88 (TT), 105 to 106 (EY), 130 to 131 (DA), and 150 to 153 (DVAQ).

Interacts with nop5. Component of box C/D small ribonucleoprotein (sRNP) particles that contain rpl7ae, FlpA and nop5, plus a guide RNA.

Functionally, involved in pre-rRNA and tRNA processing. Utilizes the methyl donor S-adenosyl-L-methionine to catalyze the site-specific 2'-hydroxyl methylation of ribose moieties in rRNA and tRNA. Site specificity is provided by a guide RNA that base pairs with the substrate. Methylation occurs at a characteristic distance from the sequence involved in base pairing with the guide RNA. The protein is Fibrillarin-like rRNA/tRNA 2'-O-methyltransferase of Methanocaldococcus jannaschii (strain ATCC 43067 / DSM 2661 / JAL-1 / JCM 10045 / NBRC 100440) (Methanococcus jannaschii).